The chain runs to 35 residues: Photosystem II reaction center protein T (35 aa).

A helical transmembrane segment spans residues 3-23 (ALVYTFLLVSTLGIIFFAIFF).

Belongs to the PsbT family. As to quaternary structure, PSII is composed of 1 copy each of membrane proteins PsbA, PsbB, PsbC, PsbD, PsbE, PsbF, PsbH, PsbI, PsbJ, PsbK, PsbL, PsbM, PsbT, PsbY, PsbZ, Psb30/Ycf12, at least 3 peripheral proteins of the oxygen-evolving complex and a large number of cofactors. It forms dimeric complexes.

The protein resides in the plastid. The protein localises to the chloroplast thylakoid membrane. Its function is as follows. Found at the monomer-monomer interface of the photosystem II (PS II) dimer, plays a role in assembly and dimerization of PSII. PSII is a light-driven water plastoquinone oxidoreductase, using light energy to abstract electrons from H(2)O, generating a proton gradient subsequently used for ATP formation. The sequence is that of Photosystem II reaction center protein T from Cycas revoluta (Sago palm).